The following is a 306-amino-acid chain: ADP-polyphosphate phosphotransferase 2 (306 aa).

It belongs to the polyphosphate kinase 2 (PPK2) family. Class I subfamily.

It catalyses the reaction [phosphate](n) + ATP = [phosphate](n+1) + ADP. The catalysed reaction is [phosphate](n) + GTP = [phosphate](n+1) + GDP. In terms of biological role, uses inorganic polyphosphate (polyP) as a donor to convert ADP to ATP. Can also convert GDP to GTP, with lower efficiency. This chain is ADP-polyphosphate phosphotransferase 2, found in Rhizobium meliloti (strain 1021) (Ensifer meliloti).